Consider the following 435-residue polypeptide: tRNA(Ile)-lysidine synthase (435 aa).

Residue 24 to 29 (SGGLDS) coordinates ATP.

The protein belongs to the tRNA(Ile)-lysidine synthase family.

It localises to the cytoplasm. The enzyme catalyses cytidine(34) in tRNA(Ile2) + L-lysine + ATP = lysidine(34) in tRNA(Ile2) + AMP + diphosphate + H(+). Functionally, ligates lysine onto the cytidine present at position 34 of the AUA codon-specific tRNA(Ile) that contains the anticodon CAU, in an ATP-dependent manner. Cytidine is converted to lysidine, thus changing the amino acid specificity of the tRNA from methionine to isoleucine. This is tRNA(Ile)-lysidine synthase from Chromobacterium violaceum (strain ATCC 12472 / DSM 30191 / JCM 1249 / CCUG 213 / NBRC 12614 / NCIMB 9131 / NCTC 9757 / MK).